A 136-amino-acid polypeptide reads, in one-letter code: Protein NrdI (136 aa).

The protein belongs to the NrdI family.

In terms of biological role, probably involved in ribonucleotide reductase function. The sequence is that of Protein NrdI from Salmonella paratyphi A (strain ATCC 9150 / SARB42).